We begin with the raw amino-acid sequence, 641 residues long: Pre-mRNA-processing factor 39 (641 aa).

The segment at 1 to 50 is disordered; sequence MEKSPEHCAEGSPSPATESAPSATEPPLPSTEPPLPSTEPPLPSTEPPLP. The span at 10–23 shows a compositional bias: low complexity; the sequence is EGSPSPATESAPSA. Over residues 24–50 the composition is skewed to pro residues; it reads TEPPLPSTEPPLPSTEPPLPSTEPPLP. HAT repeat units follow at residues 50-82, 84-116, 118-150, 158-193, 304-336, 338-370, and 372-407; these read PPLP…YVEQ, NHLF…LEKK, NNIL…FLKE, ETSL…WETE, NFEE…FELE, GSNE…YMEN, and SVEG…QQGN.

It belongs to the PRP39 family.

The protein resides in the nucleus. Functionally, involved in pre-mRNA splicing. The chain is Pre-mRNA-processing factor 39 (prpf39) from Xenopus laevis (African clawed frog).